The primary structure comprises 443 residues: Ribulose bisphosphate carboxylase large chain (443 aa).

Residues Asn89 and Thr139 each coordinate substrate. Lys141 functions as the Proton acceptor in the catalytic mechanism. Lys143 contacts substrate. Lys167, Asp169, and Glu170 together coordinate Mg(2+). The residue at position 167 (Lys167) is an N6-carboxylysine. His260 serves as the catalytic Proton acceptor. Residues Arg261, His293, and Ser345 each coordinate substrate.

It belongs to the RuBisCO large chain family. Type I subfamily. Heterohexadecamer of 8 large chains and 8 small chains; disulfide-linked. The disulfide link is formed within the large subunit homodimers. Requires Mg(2+) as cofactor. In terms of processing, the disulfide bond which can form in the large chain dimeric partners within the hexadecamer appears to be associated with oxidative stress and protein turnover.

It is found in the plastid. Its subcellular location is the chloroplast. The catalysed reaction is 2 (2R)-3-phosphoglycerate + 2 H(+) = D-ribulose 1,5-bisphosphate + CO2 + H2O. It carries out the reaction D-ribulose 1,5-bisphosphate + O2 = 2-phosphoglycolate + (2R)-3-phosphoglycerate + 2 H(+). In terms of biological role, ruBisCO catalyzes two reactions: the carboxylation of D-ribulose 1,5-bisphosphate, the primary event in carbon dioxide fixation, as well as the oxidative fragmentation of the pentose substrate in the photorespiration process. Both reactions occur simultaneously and in competition at the same active site. The polypeptide is Ribulose bisphosphate carboxylase large chain (Callitriche heterophylla (Large water-starwort)).